The primary structure comprises 187 residues: Segregation and condensation protein B (187 aa).

This sequence belongs to the ScpB family. In terms of assembly, homodimer. Homodimerization may be required to stabilize the binding of ScpA to the Smc head domains. Component of a cohesin-like complex composed of ScpA, ScpB and the Smc homodimer, in which ScpA and ScpB bind to the head domain of Smc. The presence of the three proteins is required for the association of the complex with DNA.

The protein localises to the cytoplasm. Participates in chromosomal partition during cell division. May act via the formation of a condensin-like complex containing Smc and ScpA that pull DNA away from mid-cell into both cell halves. This chain is Segregation and condensation protein B, found in Agathobacter rectalis (strain ATCC 33656 / DSM 3377 / JCM 17463 / KCTC 5835 / VPI 0990) (Eubacterium rectale).